Here is a 236-residue protein sequence, read N- to C-terminus: Sorulation-regulated protein 2 (236 aa).

The N-terminal stretch at 1–20 is a signal peptide; that stretch reads MLGLYLSSLFFAFFMAQVFA. N-linked (GlcNAc...) asparagine glycosylation is found at Asn155, Asn160, Asn203, and Asn212. Residue Asn212 is the site of GPI-anchor amidated asparagine attachment. A propeptide spans 213 to 236 (removed in mature form); sequence SSSSLMPSMGILSFLFGLYLLLHP.

Post-translationally, the GPI-anchor is attached to the protein in the endoplasmic reticulum and serves to target the protein to the cell surface. There, the glucosamine-inositol phospholipid moiety is cleaved off and the GPI-modified mannoprotein is covalently attached via its lipidless GPI glycan remnant to the 1,6-beta-glucan of the outer cell wall layer. N-glycosylated.

It localises to the spore wall. It is found in the secreted. The protein localises to the cell wall. The protein resides in the membrane. The polypeptide is Sorulation-regulated protein 2 (Saccharomyces cerevisiae (strain ATCC 204508 / S288c) (Baker's yeast)).